The sequence spans 616 residues: Dihydroxy-acid dehydratase (616 aa).

Asp81 serves as a coordination point for Mg(2+). A [2Fe-2S] cluster-binding site is contributed by Cys122. Mg(2+) is bound by residues Asp123 and Lys124. Lys124 bears the N6-carboxylysine mark. Cys196 contributes to the [2Fe-2S] cluster binding site. Glu496 is a binding site for Mg(2+). Ser522 acts as the Proton acceptor in catalysis.

The protein belongs to the IlvD/Edd family. In terms of assembly, homodimer. The cofactor is [2Fe-2S] cluster. Mg(2+) is required as a cofactor.

The catalysed reaction is (2R)-2,3-dihydroxy-3-methylbutanoate = 3-methyl-2-oxobutanoate + H2O. It catalyses the reaction (2R,3R)-2,3-dihydroxy-3-methylpentanoate = (S)-3-methyl-2-oxopentanoate + H2O. Its pathway is amino-acid biosynthesis; L-isoleucine biosynthesis; L-isoleucine from 2-oxobutanoate: step 3/4. The protein operates within amino-acid biosynthesis; L-valine biosynthesis; L-valine from pyruvate: step 3/4. Functionally, functions in the biosynthesis of branched-chain amino acids. Catalyzes the dehydration of (2R,3R)-2,3-dihydroxy-3-methylpentanoate (2,3-dihydroxy-3-methylvalerate) into 2-oxo-3-methylpentanoate (2-oxo-3-methylvalerate) and of (2R)-2,3-dihydroxy-3-methylbutanoate (2,3-dihydroxyisovalerate) into 2-oxo-3-methylbutanoate (2-oxoisovalerate), the penultimate precursor to L-isoleucine and L-valine, respectively. The chain is Dihydroxy-acid dehydratase from Streptomyces griseus subsp. griseus (strain JCM 4626 / CBS 651.72 / NBRC 13350 / KCC S-0626 / ISP 5235).